The sequence spans 337 residues: Delta-aminolevulinic acid dehydratase (337 aa).

K205 (schiff-base intermediate with substrate) is an active-site residue. 5-aminolevulinate is bound by residues R215 and K229. E245 contributes to the Mg(2+) binding site. K260 acts as the Schiff-base intermediate with substrate in catalysis. 5-aminolevulinate is bound by residues S286 and Y324.

Belongs to the ALAD family. Homooctamer; formed by oligomerization of dimers. The cofactor is Mg(2+).

It catalyses the reaction 2 5-aminolevulinate = porphobilinogen + 2 H2O + H(+). It functions in the pathway porphyrin-containing compound metabolism; protoporphyrin-IX biosynthesis; coproporphyrinogen-III from 5-aminolevulinate: step 1/4. With respect to regulation, stimulated by magnesium ions. Catalyzes an early step in the biosynthesis of tetrapyrroles. Binds two molecules of 5-aminolevulinate per subunit, each at a distinct site, and catalyzes their condensation to form porphobilinogen. In Pseudomonas aeruginosa (strain ATCC 15692 / DSM 22644 / CIP 104116 / JCM 14847 / LMG 12228 / 1C / PRS 101 / PAO1), this protein is Delta-aminolevulinic acid dehydratase (hemB).